A 699-amino-acid polypeptide reads, in one-letter code: Elongation factor G (699 aa).

The region spanning 8–283 (EHIRNIGICA…AVVYFLPSPI (276 aa)) is the tr-type G domain. GTP is bound by residues 17-24 (AHIDAGKT), 81-85 (DTPGH), and 135-138 (NKMD).

This sequence belongs to the TRAFAC class translation factor GTPase superfamily. Classic translation factor GTPase family. EF-G/EF-2 subfamily.

It is found in the cytoplasm. In terms of biological role, catalyzes the GTP-dependent ribosomal translocation step during translation elongation. During this step, the ribosome changes from the pre-translocational (PRE) to the post-translocational (POST) state as the newly formed A-site-bound peptidyl-tRNA and P-site-bound deacylated tRNA move to the P and E sites, respectively. Catalyzes the coordinated movement of the two tRNA molecules, the mRNA and conformational changes in the ribosome. This is Elongation factor G from Rickettsia akari (strain Hartford).